Reading from the N-terminus, the 288-residue chain is S-methyl-5'-thioadenosine phosphorylase (288 aa).

Phosphate is bound by residues Ser12, 54 to 55, and 87 to 88; these read RH and SA. Substrate is bound at residue Met186. Thr187 contributes to the phosphate binding site. 210–212 is a substrate binding site; the sequence is DYD.

The protein belongs to the PNP/MTAP phosphorylase family. MTAP subfamily. As to quaternary structure, homohexamer. Dimer of a homotrimer.

The enzyme catalyses S-methyl-5'-thioadenosine + phosphate = 5-(methylsulfanyl)-alpha-D-ribose 1-phosphate + adenine. Its pathway is amino-acid biosynthesis; L-methionine biosynthesis via salvage pathway; S-methyl-5-thio-alpha-D-ribose 1-phosphate from S-methyl-5'-thioadenosine (phosphorylase route): step 1/1. Functionally, catalyzes the reversible phosphorylation of S-methyl-5'-thioadenosine (MTA) to adenine and 5-methylthioribose-1-phosphate. Involved in the breakdown of MTA, a major by-product of polyamine biosynthesis. Responsible for the first step in the methionine salvage pathway after MTA has been generated from S-adenosylmethionine. Has broad substrate specificity with 6-aminopurine nucleosides as preferred substrates. The sequence is that of S-methyl-5'-thioadenosine phosphorylase from Chloroflexus aurantiacus (strain ATCC 29366 / DSM 635 / J-10-fl).